A 121-amino-acid chain; its full sequence is Large ribosomal subunit protein uL14 (121 aa).

It belongs to the universal ribosomal protein uL14 family. In terms of assembly, part of the 50S ribosomal subunit. Forms a cluster with proteins L3 and L19. In the 70S ribosome, L14 and L19 interact and together make contacts with the 16S rRNA in bridges B5 and B8.

Binds to 23S rRNA. Forms part of two intersubunit bridges in the 70S ribosome. In Synechococcus sp. (strain WH7803), this protein is Large ribosomal subunit protein uL14.